Reading from the N-terminus, the 368-residue chain is Propane 2-monooxygenase, hydroxylase component small subunit (368 aa).

The segment at 1 to 33 is disordered; sequence MSAPAQPRERSFPSIEFTDAEADAREFPSSRSR.

Belongs to the TmoE/XamoE family. In terms of assembly, the propane 2-monooxygenase multicomponent enzyme system is composed of an electron transfer component and a monooxygenase component interacting with the effector protein PrmD. The electron transfer component is composed of a reductase (PrmB), and the monooxygenase component is formed by a large subunit (PrmA) and a small subunit (PrmC). Probably requires the presence of the chaperonin-like protein PrmG to ensure a productive folding, resulting of a soluble PrmC, which leads to the active form of PrmABCD.

The enzyme catalyses propane + NADH + O2 + H(+) = propan-2-ol + NAD(+) + H2O. The catalysed reaction is phenol + NADH + O2 + H(+) = hydroquinone + NAD(+) + H2O. Component of the propane 2-monooxygenase multicomponent enzyme system which is involved in the degradation of propane via the O2-dependent hydroxylation of propane. Under acetone induction, also able to catalyze the oxidation of phenol to yield hydroquinone. The protein is Propane 2-monooxygenase, hydroxylase component small subunit of Gordonia sp. (strain TY-5).